The chain runs to 169 residues: Peptide methionine sulfoxide reductase MsrA (169 aa).

Cys-10 is an active-site residue.

Belongs to the MsrA Met sulfoxide reductase family.

It carries out the reaction L-methionyl-[protein] + [thioredoxin]-disulfide + H2O = L-methionyl-(S)-S-oxide-[protein] + [thioredoxin]-dithiol. It catalyses the reaction [thioredoxin]-disulfide + L-methionine + H2O = L-methionine (S)-S-oxide + [thioredoxin]-dithiol. Has an important function as a repair enzyme for proteins that have been inactivated by oxidation. Catalyzes the reversible oxidation-reduction of methionine sulfoxide in proteins to methionine. In Streptococcus pyogenes serotype M12 (strain MGAS2096), this protein is Peptide methionine sulfoxide reductase MsrA.